A 206-amino-acid chain; its full sequence is Transmembrane emp24 domain-containing protein bai (206 aa).

A signal peptide spans Met1–Ala20. The Lumenal segment spans residues Val21 to Arg172. A GOLD domain is found at Gln30–Arg140. A helical transmembrane segment spans residues Val173–Leu193. Over Tyr194–Glu206 the chain is Cytoplasmic.

Belongs to the EMP24/GP25L family.

It is found in the membrane. Functionally, eca and bai are essential, though not redundant, for dorsoventral patterning of the embryo. Specifically required during early embryogenesis for the activity of maternal tkv, while the zygotic tkv is not affected. In Drosophila ananassae (Fruit fly), this protein is Transmembrane emp24 domain-containing protein bai.